Consider the following 305-residue polypeptide: Methionyl-tRNA formyltransferase (305 aa).

A (6S)-5,6,7,8-tetrahydrofolate-binding site is contributed by S108–P111.

It belongs to the Fmt family.

It carries out the reaction L-methionyl-tRNA(fMet) + (6R)-10-formyltetrahydrofolate = N-formyl-L-methionyl-tRNA(fMet) + (6S)-5,6,7,8-tetrahydrofolate + H(+). In terms of biological role, attaches a formyl group to the free amino group of methionyl-tRNA(fMet). The formyl group appears to play a dual role in the initiator identity of N-formylmethionyl-tRNA by promoting its recognition by IF2 and preventing the misappropriation of this tRNA by the elongation apparatus. This Thermus thermophilus (strain ATCC 27634 / DSM 579 / HB8) protein is Methionyl-tRNA formyltransferase.